Reading from the N-terminus, the 288-residue chain is Bifunctional protein FolD (288 aa).

NADP(+) is bound by residues 166–168 and Ile232; that span reads GAS.

This sequence belongs to the tetrahydrofolate dehydrogenase/cyclohydrolase family. In terms of assembly, homodimer.

The enzyme catalyses (6R)-5,10-methylene-5,6,7,8-tetrahydrofolate + NADP(+) = (6R)-5,10-methenyltetrahydrofolate + NADPH. It carries out the reaction (6R)-5,10-methenyltetrahydrofolate + H2O = (6R)-10-formyltetrahydrofolate + H(+). Its pathway is one-carbon metabolism; tetrahydrofolate interconversion. In terms of biological role, catalyzes the oxidation of 5,10-methylenetetrahydrofolate to 5,10-methenyltetrahydrofolate and then the hydrolysis of 5,10-methenyltetrahydrofolate to 10-formyltetrahydrofolate. This chain is Bifunctional protein FolD, found in Shigella dysenteriae serotype 1 (strain Sd197).